Consider the following 337-residue polypeptide: Ketol-acid reductoisomerase (NADP(+)) (337 aa).

Residues 3–183 form the KARI N-terminal Rossmann domain; the sequence is VEVFYDDDAD…GGTRAGVIKT (181 aa). Residues 26–29, Ser-52, Ser-54, and 84–87 contribute to the NADP(+) site; these read YGSQ and DTAQ. His-109 is an active-site residue. Gly-135 lines the NADP(+) pocket. The region spanning 184–329 is the KARI C-terminal knotted domain; the sequence is TFTEETETDL…GRLRAMMSWV (146 aa). The Mg(2+) site is built by Asp-192, Glu-196, Glu-228, and Glu-232. Ser-253 is a substrate binding site.

It belongs to the ketol-acid reductoisomerase family. The cofactor is Mg(2+).

It carries out the reaction (2R)-2,3-dihydroxy-3-methylbutanoate + NADP(+) = (2S)-2-acetolactate + NADPH + H(+). The catalysed reaction is (2R,3R)-2,3-dihydroxy-3-methylpentanoate + NADP(+) = (S)-2-ethyl-2-hydroxy-3-oxobutanoate + NADPH + H(+). It functions in the pathway amino-acid biosynthesis; L-isoleucine biosynthesis; L-isoleucine from 2-oxobutanoate: step 2/4. Its pathway is amino-acid biosynthesis; L-valine biosynthesis; L-valine from pyruvate: step 2/4. Involved in the biosynthesis of branched-chain amino acids (BCAA). Catalyzes an alkyl-migration followed by a ketol-acid reduction of (S)-2-acetolactate (S2AL) to yield (R)-2,3-dihydroxy-isovalerate. In the isomerase reaction, S2AL is rearranged via a Mg-dependent methyl migration to produce 3-hydroxy-3-methyl-2-ketobutyrate (HMKB). In the reductase reaction, this 2-ketoacid undergoes a metal-dependent reduction by NADPH to yield (R)-2,3-dihydroxy-isovalerate. This is Ketol-acid reductoisomerase (NADP(+)) from Salinispora tropica (strain ATCC BAA-916 / DSM 44818 / JCM 13857 / NBRC 105044 / CNB-440).